We begin with the raw amino-acid sequence, 490 residues long: Bifunctional protein HldE (490 aa).

A ribokinase region spans residues 1–330 (MLDFEQLSPA…RKILPHAFLA (330 aa)). 205 to 208 (NRKE) contacts ATP. Asp275 is a catalytic residue. Residues 358 to 490 (FTNGCFDILH…LVARAQNGKS (133 aa)) are cytidylyltransferase.

In the N-terminal section; belongs to the carbohydrate kinase PfkB family. The protein in the C-terminal section; belongs to the cytidylyltransferase family. In terms of assembly, homodimer.

It catalyses the reaction D-glycero-beta-D-manno-heptose 7-phosphate + ATP = D-glycero-beta-D-manno-heptose 1,7-bisphosphate + ADP + H(+). The enzyme catalyses D-glycero-beta-D-manno-heptose 1-phosphate + ATP + H(+) = ADP-D-glycero-beta-D-manno-heptose + diphosphate. The protein operates within nucleotide-sugar biosynthesis; ADP-L-glycero-beta-D-manno-heptose biosynthesis; ADP-L-glycero-beta-D-manno-heptose from D-glycero-beta-D-manno-heptose 7-phosphate: step 1/4. Its pathway is nucleotide-sugar biosynthesis; ADP-L-glycero-beta-D-manno-heptose biosynthesis; ADP-L-glycero-beta-D-manno-heptose from D-glycero-beta-D-manno-heptose 7-phosphate: step 3/4. Its function is as follows. Catalyzes the phosphorylation of D-glycero-D-manno-heptose 7-phosphate at the C-1 position to selectively form D-glycero-beta-D-manno-heptose-1,7-bisphosphate. Functionally, catalyzes the ADP transfer from ATP to D-glycero-beta-D-manno-heptose 1-phosphate, yielding ADP-D-glycero-beta-D-manno-heptose. This Rhodopseudomonas palustris (strain BisA53) protein is Bifunctional protein HldE.